Here is a 396-residue protein sequence, read N- to C-terminus: 1-deoxy-D-xylulose 5-phosphate reductoisomerase (396 aa).

NADPH-binding residues include T10, G11, S12, I13, and N123. K124 is a 1-deoxy-D-xylulose 5-phosphate binding site. Residue E125 participates in NADPH binding. D149 serves as a coordination point for Mn(2+). Residues S150, E151, S185, and H208 each coordinate 1-deoxy-D-xylulose 5-phosphate. Mn(2+) is bound at residue E151. An NADPH-binding site is contributed by G214. 1-deoxy-D-xylulose 5-phosphate is bound by residues S221, N226, K227, and E230. E230 provides a ligand contact to Mn(2+).

It belongs to the DXR family. It depends on Mg(2+) as a cofactor. Requires Mn(2+) as cofactor.

The enzyme catalyses 2-C-methyl-D-erythritol 4-phosphate + NADP(+) = 1-deoxy-D-xylulose 5-phosphate + NADPH + H(+). It participates in isoprenoid biosynthesis; isopentenyl diphosphate biosynthesis via DXP pathway; isopentenyl diphosphate from 1-deoxy-D-xylulose 5-phosphate: step 1/6. Its function is as follows. Catalyzes the NADPH-dependent rearrangement and reduction of 1-deoxy-D-xylulose-5-phosphate (DXP) to 2-C-methyl-D-erythritol 4-phosphate (MEP). The polypeptide is 1-deoxy-D-xylulose 5-phosphate reductoisomerase (Shewanella sp. (strain MR-4)).